Consider the following 354-residue polypeptide: Isopentenyl-diphosphate delta-isomerase (354 aa).

11 to 12 is a binding site for substrate; sequence KK. Residues serine 67, 68-70, serine 98, and asparagine 126 contribute to the FMN site; that span reads SMT. Residue 98-100 participates in substrate binding; the sequence is SFK. Position 160 (glutamine 160) interacts with substrate. Position 161 (glutamate 161) interacts with Mg(2+). FMN-binding positions include lysine 192, threonine 222, and 289-290; that span reads AA.

Belongs to the IPP isomerase type 2 family. Homooctamer. Dimer of tetramers. Requires FMN as cofactor. NADPH is required as a cofactor. The cofactor is Mg(2+).

The protein resides in the cytoplasm. It catalyses the reaction isopentenyl diphosphate = dimethylallyl diphosphate. Involved in the biosynthesis of isoprenoids. Catalyzes the 1,3-allylic rearrangement of the homoallylic substrate isopentenyl (IPP) to its allylic isomer, dimethylallyl diphosphate (DMAPP). The sequence is that of Isopentenyl-diphosphate delta-isomerase from Borrelia garinii subsp. bavariensis (strain ATCC BAA-2496 / DSM 23469 / PBi) (Borreliella bavariensis).